The sequence spans 123 residues: Cysteine-rich DPF motif domain-containing protein 1 (123 aa).

A disordered region spans residues 102 to 123 (RQDLEKRKAPSKRTPSQPGSRT). Over residues 114–123 (RTPSQPGSRT) the composition is skewed to polar residues.

This sequence belongs to the CDPF1 family.

In Homo sapiens (Human), this protein is Cysteine-rich DPF motif domain-containing protein 1 (CDPF1).